Reading from the N-terminus, the 131-residue chain is MSMSDPIADMLTRIRNGQIAGHSNVVMPSSKVKVAVAKVLTGEGYVSSYSVSDKNGKSELSVDLKYFEGQPVIEMLKRVSRPGLRVYKNKDELPKVIGGLGVAVVSTSKGIMSDRDARKAGIGGEIICYIA.

Belongs to the universal ribosomal protein uS8 family. In terms of assembly, part of the 30S ribosomal subunit. Contacts proteins S5 and S12.

In terms of biological role, one of the primary rRNA binding proteins, it binds directly to 16S rRNA central domain where it helps coordinate assembly of the platform of the 30S subunit. The protein is Small ribosomal subunit protein uS8 of Hydrogenovibrio crunogenus (strain DSM 25203 / XCL-2) (Thiomicrospira crunogena).